The primary structure comprises 63 residues: Large ribosomal subunit protein bL28 (63 aa).

Belongs to the bacterial ribosomal protein bL28 family.

This Pelobacter propionicus (strain DSM 2379 / NBRC 103807 / OttBd1) protein is Large ribosomal subunit protein bL28.